The following is a 178-amino-acid chain: Caveolin-1 (178 aa).

S2 carries the post-translational modification N-acetylserine. Residue S2 is modified to Phosphoserine. The segment at 2–94 is required for homooligomerization; sequence SGGKYVDSEG…WKASFTTFTV (93 aa). At 2–104 the chain is on the cytoplasmic side; sequence SGGKYVDSEG…TKYWFYRLLS (103 aa). K5 carries the N6-acetyllysine; alternate modification. A Glycyl lysine isopeptide (Lys-Gly) (interchain with G-Cter in ubiquitin); alternate cross-link involves residue K5. Y6 carries the post-translational modification Phosphotyrosine. S9 is subject to Phosphoserine. Y14 is modified (phosphotyrosine; by ABL1). Phosphotyrosine is present on Y25. Residues K26 and K30 each participate in a glycyl lysine isopeptide (Lys-Gly) (interchain with G-Cter in ubiquitin) cross-link. Phosphoserine is present on S37. Glycyl lysine isopeptide (Lys-Gly) (interchain with G-Cter in ubiquitin) cross-links involve residues K39, K47, and K57. The segment at 82–94 is interaction with CAVIN3; it reads DGIWKASFTTFTV. Positions 105-125 form an intramembrane region, helical; that stretch reads ALFGIPMALIWGIYFAILSFL. At 126–178 the chain is on the cytoplasmic side; sequence HIWAVVPCIKSFLIEIQCISRVYSIYIHTVCDPLFEAIGKIFSNVRIGLQKEI. An interacts with SPRY1, SPRY2, SPRY3 and SPRY4 region spans residues 131–142; the sequence is VPCIKSFLIEIQ. 3 S-palmitoyl cysteine lipidation sites follow: C133, C143, and C156. Residues 149–160 form an interacts with SPRY1, SPRY2, and SPRY4 region; that stretch reads SIYIHTVCDPLF. Residues 167 to 178 form an interacts with SPRY1, SPRY2, SPRY3 and SPRY4 region; sequence FSNVRIGLQKEI.

The protein belongs to the caveolin family. As to quaternary structure, homooligomer. Interacts with GLIPR2. Interacts with NOSTRIN. Interacts with SNAP25 and STX1A. Interacts (via the N-terminus) with DPP4; the interaction is direct. Interacts with CTNNB1, CDH1 and JUP. Interacts with PACSIN2; this interaction induces membrane tubulation. Interacts with SLC7A9. Interacts with BMX and BTK. Interacts with TGFBR1. Interacts with CAVIN3 (via leucine-zipper domain) in a cholesterol-sensitive manner. Interacts with CAVIN1. Interacts with EHD2 in a cholesterol-dependent manner. Forms a ternary complex with UBXN6 and VCP; mediates CAV1 targeting to lysosomes for degradation. Interacts with ABCG1; this interaction regulates ABCG1-mediated cholesterol efflux. Interacts with NEU3; this interaction enhances NEU3 sialidase activity within caveola. Interacts (via C-terminus) with SPRY1, SPRY2 (via C-terminus), SPRY3, and SPRY4. Interacts with IGFBP5; this interaction allows trafficking of IGFBP5 from the plasma membrane to the nucleus. Post-translationally, phosphorylated at Tyr-14 by ABL1 in response to oxidative stress. Ubiquitinated. Undergo monoubiquitination and multi- and/or polyubiquitination. Monoubiquitination of N-terminal lysines promotes integration in a ternary complex with UBXN6 and VCP which promotes oligomeric CAV1 targeting to lysosomes for degradation. Ubiquitinated by ZNRF1; leading to degradation and modulation of the TLR4-mediated immune response.

It is found in the golgi apparatus membrane. The protein resides in the cell membrane. It localises to the membrane. The protein localises to the caveola. Its subcellular location is the membrane raft. In terms of biological role, may act as a scaffolding protein within caveolar membranes. Forms a stable heterooligomeric complex with CAV2 that targets to lipid rafts and drives caveolae formation. Mediates the recruitment of CAVIN proteins (CAVIN1/2/3/4) to the caveolae. Interacts directly with G-protein alpha subunits and can functionally regulate their activity. Involved in the costimulatory signal essential for T-cell receptor (TCR)-mediated T-cell activation. Its binding to DPP4 induces T-cell proliferation and NF-kappa-B activation in a T-cell receptor/CD3-dependent manner. Recruits CTNNB1 to caveolar membranes and may regulate CTNNB1-mediated signaling through the Wnt pathway. Negatively regulates TGFB1-mediated activation of SMAD2/3 by mediating the internalization of TGFBR1 from membrane rafts leading to its subsequent degradation. Binds 20(S)-hydroxycholesterol (20(S)-OHC). The chain is Caveolin-1 (CAV1) from Saimiri boliviensis boliviensis (Bolivian squirrel monkey).